Here is a 654-residue protein sequence, read N- to C-terminus: Peptide-N(4)-(N-acetyl-beta-glucosaminyl)asparagine amidase (654 aa).

An N-acetylalanine modification is found at Ala2. Residues 30-91 (EASKLLLTYA…EGETHLIFPK (62 aa)) form the PUB domain. The disordered stretch occupies residues 112–163 (RLDGSNKSHKVKSSQQPAASTQLPTTPSSNPSGLNQHTRNRQGQSSDPPSAS). Residues 124–163 (SSQQPAASTQLPTTPSSNPSGLNQHTRNRQGQSSDPPSAS) are compositionally biased toward polar residues. A Phosphothreonine modification is found at Thr137. Zn(2+)-binding residues include Cys250, Cys253, Cys283, and Cys286. The active-site Nucleophile is Cys309. Residues His336 and Asp353 contribute to the active site. The region spanning 454-654 (ELGGRISGSV…LEIIIKFSDL (201 aa)) is the PAW domain.

Belongs to the transglutaminase-like superfamily. PNGase family. In terms of assembly, component of a complex required to couple retrotranslocation, ubiquitination and deglycosylation composed of NGLY1, SAKS1, AMFR, VCP and RAD23B. Interacts with the proteasome components RAD23B and PSMC1. Interacts with directly with VCP. Interacts with DERL1, bringing it close to the endoplasmic reticulum membrane. Interacts with SAKS1. Zn(2+) serves as cofactor.

Its subcellular location is the cytoplasm. It catalyses the reaction Hydrolysis of an N(4)-(acetyl-beta-D-glucosaminyl)asparagine residue in which the glucosamine residue may be further glycosylated, to yield a (substituted) N-acetyl-beta-D-glucosaminylamine and a peptide containing an aspartate residue.. With respect to regulation, inhibited by Z-VAD-fmk, a well-known caspase inhibitor, which inhibits enzyme activity through covalent binding of the carbohydrate to the single Cys-306 residue. In terms of biological role, specifically deglycosylates the denatured form of N-linked glycoproteins in the cytoplasm and assists their proteasome-mediated degradation. Cleaves the beta-aspartyl-glucosamine (GlcNAc) of the glycan and the amide side chain of Asn, converting Asn to Asp. Prefers proteins containing high-mannose over those bearing complex type oligosaccharides. Can recognize misfolded proteins in the endoplasmic reticulum that are exported to the cytosol to be destroyed and deglycosylate them, while it has no activity toward native proteins. Deglycosylation is a prerequisite for subsequent proteasome-mediated degradation of some, but not all, misfolded glycoproteins. This Homo sapiens (Human) protein is Peptide-N(4)-(N-acetyl-beta-glucosaminyl)asparagine amidase (NGLY1).